Reading from the N-terminus, the 448-residue chain is Probable glycine dehydrogenase (decarboxylating) subunit 1 (448 aa).

It belongs to the GcvP family. N-terminal subunit subfamily. In terms of assembly, the glycine cleavage system is composed of four proteins: P, T, L and H. In this organism, the P 'protein' is a heterodimer of two subunits.

It catalyses the reaction N(6)-[(R)-lipoyl]-L-lysyl-[glycine-cleavage complex H protein] + glycine + H(+) = N(6)-[(R)-S(8)-aminomethyldihydrolipoyl]-L-lysyl-[glycine-cleavage complex H protein] + CO2. Functionally, the glycine cleavage system catalyzes the degradation of glycine. The P protein binds the alpha-amino group of glycine through its pyridoxal phosphate cofactor; CO(2) is released and the remaining methylamine moiety is then transferred to the lipoamide cofactor of the H protein. The polypeptide is Probable glycine dehydrogenase (decarboxylating) subunit 1 (Listeria welshimeri serovar 6b (strain ATCC 35897 / DSM 20650 / CCUG 15529 / CIP 8149 / NCTC 11857 / SLCC 5334 / V8)).